The following is a 261-amino-acid chain: Transcription antitermination protein NusB (261 aa).

Positions 168 to 261 (ARVEDQPSDD…DLHKKDTTDD (94 aa)) are disordered. Residues 217–228 (VDTTSGNASDPE) show a composition bias toward polar residues. A compositionally biased stretch (basic and acidic residues) spans 242–261 (PTSKDHELATDLHKKDTTDD).

This sequence belongs to the NusB family.

Functionally, involved in transcription antitermination. Required for transcription of ribosomal RNA (rRNA) genes. Binds specifically to the boxA antiterminator sequence of the ribosomal RNA (rrn) operons. This is Transcription antitermination protein NusB from Cutibacterium acnes (strain DSM 16379 / KPA171202) (Propionibacterium acnes).